The following is a 93-amino-acid chain: Small ribosomal subunit protein uS19 (93 aa).

Belongs to the universal ribosomal protein uS19 family.

Protein S19 forms a complex with S13 that binds strongly to the 16S ribosomal RNA. The protein is Small ribosomal subunit protein uS19 of Nocardia farcinica (strain IFM 10152).